Here is a 216-residue protein sequence, read N- to C-terminus: 3-keto-L-gulonate-6-phosphate decarboxylase UlaD (216 aa).

Asp11 is a binding site for substrate. Residues Glu33 and Asp62 each contribute to the Mg(2+) site. Arg192 lines the substrate pocket.

This sequence belongs to the HPS/KGPDC family. KGPDC subfamily. Homodimer. Requires Mg(2+) as cofactor.

It carries out the reaction 3-dehydro-L-gulonate 6-phosphate + H(+) = L-xylulose 5-phosphate + CO2. The protein operates within cofactor degradation; L-ascorbate degradation; D-xylulose 5-phosphate from L-ascorbate: step 2/4. Its function is as follows. Catalyzes the decarboxylation of 3-keto-L-gulonate-6-P into L-xylulose-5-P. Is involved in the anaerobic L-ascorbate utilization. In Salmonella typhi, this protein is 3-keto-L-gulonate-6-phosphate decarboxylase UlaD.